The sequence spans 310 residues: UDP-N-acetylenolpyruvoylglucosamine reductase (310 aa).

The FAD-binding PCMH-type domain maps to 30 to 200; the sequence is RVGGPAQWLA…VAAEFQLEPG (171 aa). R179 is an active-site residue. S230 functions as the Proton donor in the catalytic mechanism. E300 is an active-site residue.

It belongs to the MurB family. FAD is required as a cofactor.

The protein resides in the cytoplasm. The catalysed reaction is UDP-N-acetyl-alpha-D-muramate + NADP(+) = UDP-N-acetyl-3-O-(1-carboxyvinyl)-alpha-D-glucosamine + NADPH + H(+). It functions in the pathway cell wall biogenesis; peptidoglycan biosynthesis. Its function is as follows. Cell wall formation. This is UDP-N-acetylenolpyruvoylglucosamine reductase from Synechococcus sp. (strain WH7803).